A 332-amino-acid polypeptide reads, in one-letter code: L-lactate dehydrogenase A chain (332 aa).

A2 is modified (N-acetylalanine). K5 is modified (N6-acetyllysine; alternate). N6-succinyllysine; alternate is present on K5. The residue at position 14 (K14) is an N6-acetyllysine. Position 29-57 (29-57 (GAVGMACAISILMKDLADEVALVDVMEDK)) interacts with NAD(+). K57 carries the post-translational modification N6-acetyllysine; alternate. Residue K57 forms a Glycyl lysine isopeptide (Lys-Gly) (interchain with G-Cter in SUMO2); alternate linkage. N6-acetyllysine is present on K81. Position 106 (R106) interacts with substrate. The residue at position 118 (K118) is an N6-acetyllysine; alternate. At K118 the chain carries N6-succinyllysine; alternate. K126 is modified (N6-acetyllysine). Residue N138 participates in NAD(+) binding. Residues N138 and R169 each contribute to the substrate site. Catalysis depends on H193, which acts as the Proton acceptor. An N6-acetyllysine mark is found at K224 and K232. Y239 is modified (phosphotyrosine). K243 is subject to N6-acetyllysine. Substrate is bound at residue T248. Residue T309 is modified to Phosphothreonine. At K318 the chain carries N6-acetyllysine; alternate. N6-succinyllysine; alternate is present on K318. T322 carries the phosphothreonine modification.

Belongs to the LDH/MDH superfamily. LDH family. Homotetramer. Interacts with PTEN upstream reading frame protein MP31. ISGylated.

The protein resides in the cytoplasm. It catalyses the reaction (S)-lactate + NAD(+) = pyruvate + NADH + H(+). The protein operates within fermentation; pyruvate fermentation to lactate; (S)-lactate from pyruvate: step 1/1. Its function is as follows. Interconverts simultaneously and stereospecifically pyruvate and lactate with concomitant interconversion of NADH and NAD(+). The protein is L-lactate dehydrogenase A chain (LDHA) of Bos mutus grunniens (Wild yak).